A 592-amino-acid chain; its full sequence is Sodium- and chloride-dependent transporter XTRP3 (592 aa).

Residues 1–5 (MEKAR) are Cytoplasmic-facing. A helical membrane pass occupies residues 6-26 (PLWANSLQFVFACISYAVGLG). Topologically, residues 27–42 (NVWRFPYLCQMYGGGS) are extracellular. The helical transmembrane segment at 43–63 (FLVPYIIMLIVEGMPLLYLEL) threads the bilayer. Over 64-79 (AVGQRMRQGSIGAWRT) the chain is Cytoplasmic. A helical transmembrane segment spans residues 80–100 (ISPYLSGVGVASVVVSFFLSM). Topologically, residues 101-165 (YYNVINAWAF…ISPSLQENGG (65 aa)) are extracellular. The N-linked (GlcNAc...) asparagine glycan is linked to Asn131. Residues 166–186 (VQWEPALCLLLAWLVVYLCIL) traverse the membrane as a helical segment. At 187-194 (RGTESTGK) the chain is on the cytoplasmic side. A helical transmembrane segment spans residues 195–215 (VVYFTASLPYCVLIIYLIRGL). The Extracellular portion of the chain corresponds to 216–241 (TLHGATNGLMYMFTPKIEQLANPKAW). Residues 242–262 (INAATQIFFSLGLGFGSLIAF) form a helical membrane-spanning segment. The Cytoplasmic portion of the chain corresponds to 263 to 276 (ASYNEPSNNCQKHA). The chain crosses the membrane as a helical span at residues 277–297 (IIVSLINSFTSIFASIVTFSI). Residues 298–389 (YGFKATFNYE…EAIKNMEVSQ (92 aa)) lie on the Extracellular side of the membrane. An N-linked (GlcNAc...) asparagine glycan is attached at Asn357. A helical membrane pass occupies residues 390-410 (LWSVLYFFMLLMLGIGSMLGN). Residues 411 to 431 (TAAILTPLTDSKIISSHLPKE) are Cytoplasmic-facing. A helical membrane pass occupies residues 432–452 (AISGLVCLVNCAIGMVFTMEA). Over 453 to 465 (GNYWFDIFNDYAA) the chain is Extracellular. The chain crosses the membrane as a helical span at residues 466–486 (TLSLLLIVLVETIAVCYVYGL). Residues 487–504 (RRFESDLKAMTGRAVSWY) lie on the Cytoplasmic side of the membrane. The chain crosses the membrane as a helical span at residues 505 to 525 (WKVMWAGVSPLLIVSLFVFYL). Residues 526–554 (SDYILTGTLKYQAWDASQGQLVTKDYPAY) lie on the Extracellular side of the membrane. A helical membrane pass occupies residues 555 to 575 (ALAVIGLLVASSTMCIPLAAL). The Cytoplasmic portion of the chain corresponds to 576–592 (GTFVQRRLKRGDADPVA).

This sequence belongs to the sodium:neurotransmitter symporter (SNF) (TC 2.A.22) family. SLC6A20 subfamily. As to expression, kidney and small intestine. Expressed in the S3 segment of the proximal tubule. Expressed in neurons.

It localises to the apical cell membrane. It carries out the reaction L-proline(out) + chloride(out) + 2 Na(+)(out) = L-proline(in) + chloride(in) + 2 Na(+)(in). The enzyme catalyses L-pipecolate(out) + chloride(out) + 2 Na(+)(out) = L-pipecolate(in) + chloride(in) + 2 Na(+)(in). It catalyses the reaction sarcosine(out) + chloride(out) + 2 Na(+)(out) = sarcosine(in) + chloride(in) + 2 Na(+)(in). The catalysed reaction is N-methyl-L-proline(out) + chloride(out) + 2 Na(+)(out) = N-methyl-L-proline(in) + chloride(in) + 2 Na(+)(in). It carries out the reaction 2-methyl-2-(methylamino)propanoate(out) + chloride(out) + 2 Na(+)(out) = 2-methyl-2-(methylamino)propanoate(in) + chloride(in) + 2 Na(+)(in). The enzyme catalyses glycine betaine(out) + chloride(out) + 2 Na(+)(out) = glycine betaine(in) + chloride(in) + 2 Na(+)(in). It catalyses the reaction glycine(out) + chloride(out) + 2 Na(+)(out) = glycine(in) + chloride(in) + 2 Na(+)(in). Its function is as follows. Mediates the Na(+)- and Cl(-)-dependent uptake of imino acids such as L-proline, N-methyl-L-proline and pipecolate as well as N-methylated amino acids. Also transports glycine, regulates proline and glycine homeostasis in the brain playing a role in the modulation of NMDAR currents. This Homo sapiens (Human) protein is Sodium- and chloride-dependent transporter XTRP3.